The chain runs to 2492 residues: MTAEPMSESKLNTLVQKLHDFLAHSSEESEETSSPPRLAMNQNTDKISGSGSNSDMMENSKEEGTSSSEKSKSSGSSRSKRKPSIVTKYVESDDEKPLDDETVNEDASNENSENDITMQSLPKGTVIVQPEPVLNEDKDDFKGPEFRSRSKMKTENLKKRGEDGLHGIVSCTACGQQVNHFQKDSIYRHPSLQVLICKNCFKYYMSDDISRDSDGMDEQCRWCAEGGNLICCDFCHNAFCKKCILRNLGRKELSTIMDENNQWYCYICHPEPLLDLVTACNSVFENLEQLLQQNKKKIKVDSEKSNKVYEHTSRFSPKKTSSNCNGEEKKLDDSCSGSVTYSYSALIVPKEMIKKAKKLIETTANMNSSYVKFLKQATDNSEISSATKLRQLKAFKSVLADIKKAHLALEEDLNSEFRAMDAVNKEKNTKEHKVIDAKFETKARKGEKPCALEKKDISKSEAKLSRKQVDSEHMHQNVPTEEQRTNKSTGGEHKKSDRKEEPQYEPANTSEDLDMDIVSVPSSVPEDIFENLETAMEVQSSVDHQGDGSSGTEQEVESSSVKLNISSKDNRGGIKSKTTAKVTKELYVKLTPVSLSNSPIKGADCQEVPQDKDGYKSCGLNPKLEKCGLGQENSDNEHLVENEVSLLLEESDLRRSPRVKTTPLRRPTETNPVTSNSDEECNETVKEKQKLSVPVRKKDKRNSSDSAIDNPKPNKLPKSKQSETVDQNSDSDEMLAILKEVSRMSHSSSSDTDINEIHTNHKTLYDLKTQAGKDDKGKRKRKSSTSGSDFDTKKGKSAKSSIISKKKRQTQSESSNYDSELEKEIKSMSKIGAARTTKKRIPNTKDFDSSEDEKHSKKGMDNQGHKNLKTSQEGSSDDAERKQERETFSSAEGTVDKDTTIMELRDRLPKKQQASASTDGVDKLSGKEESFTSLEVRKVAETKEKSKHLKTKTCKKVQDGLSDIAEKFLKKDQSDETSEDDKKQSKKGTEEKKKPSDFKKKVIKMEQQYESSSDGTEKLPEREEICHFPKGIKQIKNGTTDGEKKSKKIRDKTSKKKDELSDYAEKSTGKGDSCDSSEDKKSKNGAYGREKKRCKLLGKSSRKRQDCSSSDTEKYSMKEDGCNSSDKRLKRIELRERRNLSSKRNTKEIQSGSSSSDAEESSEDNKKKKQRTSSKKKAVIVKEKKRNSLRTSTKRKQADITSSSSSDIEDDDQNSIGEGSSDEQKIKPVTENLVLSSHTGFCQSSGDEALSKSVPVTVDDDDDDNDPENRIAKKMLLEEIKANLSSDEDGSSDDEPEEGKKRTGKQNEENPGDEEAKNQVNSESDSDSEESKKPRYRHRLLRHKLTVSDGESGEEKKTKPKEHKEVKGRNRRKVSSEDSEDSDFQESGVSEEVSESEDEQRPRTRSAKKAELEENQRSYKQKKKRRRIKVQEDSSSENKSNSEEEEEEKEEEEEEEEEEEEEEEDENDDSKSPGKGRKKIRKILKDDKLRTETQNALKEEEERRKRIAEREREREKLREVIEIEDASPTKCPITTKLVLDEDEETKEPLVQVHRNMVIKLKPHQVDGVQFMWDCCCESVKKTKKSPGSGCILAHCMGLGKTLQVVSFLHTVLLCDKLDFSTALVVCPLNTALNWMNEFEKWQEGLKDDEKLEVSELATVKRPQERSYMLQRWQEDGGVMIIGYEMYRNLAQGRNVKSRKLKEIFNKALVDPGPDFVVCDEGHILKNEASAVSKAMNSIRSRRRIILTGTPLQNNLIEYHCMVNFIKENLLGSIKEFRNRFINPIQNGQCADSTMVDVRVMKKRAHILYEMLAGCVQRKDYTALTKFLPPKHEYVLAVRMTSIQCKLYQYYLDHLTGVGNNSEGGRGKAGAKLFQDFQMLSRIWTHPWCLQLDYISKENKGYFDEDSMDEFIASDSDETSMSLSSDDYTKKKKKGKKGKKDSSSSGSGSDNDVEVIKVWNSRSRGGGEGNVDETGNNPSVSLKLEESKATSSSNPSSPAPDWYKDFVTDADAEVLEHSGKMVLLFEILRMAEEIGDKVLVFSQSLISLDLIEDFLELASREKTEDKDKPLIYKGEGKWLRNIDYYRLDGSTTAQSRKKWAEEFNDETNVRGRLFIISTKAGSLGINLVAANRVIIFDASWNPSYDIQSIFRVYRFGQTKPVYVYRFLAQGTMEDKIYDRQVTKQSLSFRVVDQQQVERHFTMNELTELYTFEPDLLDDPNSEKKKKRDTPMLPKDTILAELLQIHKEHIVGYHEHDSLLDHKEEEELTEEERKAAWAEYEAEKKGLTMRFNIPTGTNLPPVSFNSQTPYIPFNLGALSAMSNQQLEDLINQGREKVVEATNSVTAVRIQPLEDIISAVWKENMNLSEAQVQALALSRQASQELDVKRREAIYNDVLTKQQMLISCVQRILMNRRLQQQYNQQQQQQMTYQQATLGHLMMPKPPNLIMNPSNYQQIDMRGMYQPVAGGMQPPPLQRAPPPMRSKNPGPSQGKSM.

The tract at residues 1–147 (MTAEPMSESK…KDDFKGPEFR (147 aa)) is disordered. Residue K10 forms a Glycyl lysine isopeptide (Lys-Gly) (interchain with G-Cter in SUMO2) linkage. Positions 17-27 (KLHDFLAHSSE) are enriched in basic and acidic residues. Phosphoserine is present on residues S25 and S34. The span at 40-57 (MNQNTDKISGSGSNSDMM) shows a compositional bias: polar residues. The span at 58–72 (ENSKEEGTSSSEKSK) shows a compositional bias: basic and acidic residues. Residue Y89 is modified to Phosphotyrosine. Residues S92 and S112 each carry the phosphoserine modification. Over residues 92 to 108 (SDDEKPLDDETVNEDAS) the composition is skewed to acidic residues. Positions 135–147 (NEDKDDFKGPEFR) are enriched in basic and acidic residues. Residues K138 and K142 each participate in a glycyl lysine isopeptide (Lys-Gly) (interchain with G-Cter in SUMO2) cross-link. One can recognise an ADD domain in the interval 159-296 (KRGEDGLHGI…LEQLLQQNKK (138 aa)). The GATA-type; atypical zinc-finger motif lies at 170-206 (SCTACGQQVNHFQKDSIYRHPSLQVLICKNCFKYYMS). Position 213 is a phosphoserine (S213). A PHD-type; atypical zinc finger spans residues 217 to 272 (DEQCRWCAEGGNLICCDFCHNAFCKKCILRNLGRKELSTIMDENNQWYCYICHPEP). A Glycyl lysine isopeptide (Lys-Gly) (interchain with G-Cter in SUMO2) cross-link involves residue K299. At S316 the chain carries Phosphoserine. K438 participates in a covalent cross-link: Glycyl lysine isopeptide (Lys-Gly) (interchain with G-Cter in SUMO2). The segment covering 445–502 (KGEKPCALEKKDISKSEAKLSRKQVDSEHMHQNVPTEEQRTNKSTGGEHKKSDRKEEP) has biased composition (basic and acidic residues). 2 disordered regions span residues 445-516 (KGEK…LDMD) and 535-576 (AMEV…GIKS). The segment covering 550 to 567 (SGTEQEVESSSVKLNISS) has biased composition (polar residues). The short motif at 581–594 (KVTKELYVKLTPVS) is the PxVxL motif element. T591 is subject to Phosphothreonine. The disordered stretch occupies residues 593 to 616 (VSLSNSPIKGADCQEVPQDKDGYK). Phosphoserine occurs at positions 594 and 598. K623 is covalently cross-linked (Glycyl lysine isopeptide (Lys-Gly) (interchain with G-Cter in SUMO1); alternate). A Glycyl lysine isopeptide (Lys-Gly) (interchain with G-Cter in SUMO2); alternate cross-link involves residue K623. S634 bears the Phosphoserine mark. The disordered stretch occupies residues 649–956 (EESDLRRSPR…KHLKTKTCKK (308 aa)). T674 carries the post-translational modification Phosphothreonine. Phosphoserine is present on residues S675, S677, S729, and S731. Positions 755-777 (NEIHTNHKTLYDLKTQAGKDDKG) are enriched in basic and acidic residues. 6 positions are modified to phosphoserine: S784, S819, S849, S850, S875, and S876. The span at 843 to 864 (NTKDFDSSEDEKHSKKGMDNQG) shows a compositional bias: basic and acidic residues. Positions 878 to 887 (DAERKQERET) are enriched in basic and acidic residues. A Phosphoserine modification is found at S889. 2 stretches are compositionally biased toward basic and acidic residues: residues 894–909 (TVDK…DRLP) and 920–944 (GVDK…ETKE). A compositionally biased stretch (basic residues) spans 945–955 (KSKHLKTKTCK). S962 is modified (phosphoserine). Position 967 is an N6-acetyllysine (K967). The segment covering 968 to 1004 (FLKKDQSDETSEDDKKQSKKGTEEKKKPSDFKKKVIK) has biased composition (basic and acidic residues). The disordered stretch occupies residues 968-1479 (FLKKDQSDET…SKSPGKGRKK (512 aa)). S974 is subject to Phosphoserine. T977 carries the phosphothreonine modification. Residue K1004 forms a Glycyl lysine isopeptide (Lys-Gly) (interchain with G-Cter in SUMO2) linkage. Residues S1011, S1012, and S1013 each carry the phosphoserine modification. The segment covering 1015–1027 (GTEKLPEREEICH) has biased composition (basic and acidic residues). The segment covering 1045-1055 (KSKKIRDKTSK) has biased composition (basic residues). A compositionally biased stretch (basic and acidic residues) spans 1056–1082 (KKDELSDYAEKSTGKGDSCDSSEDKKS). The residue at position 1061 (S1061) is a Phosphoserine. Y1063 bears the Phosphotyrosine mark. Over residues 1090-1102 (EKKRCKLLGKSSR) the composition is skewed to basic residues. A compositionally biased stretch (basic and acidic residues) spans 1103–1139 (KRQDCSSSDTEKYSMKEDGCNSSDKRLKRIELRERRN). Residues 1167–1195 (KKKQRTSSKKKAVIVKEKKRNSLRTSTKR) are compositionally biased toward basic residues. An interaction with DAXX region spans residues 1189 to 1326 (LRTSTKRKQA…KNQVNSESDS (138 aa)). Positions 1233-1246 (LVLSSHTGFCQSSG) are enriched in polar residues. Phosphoserine occurs at positions 1244, 1245, and 1253. Positions 1267-1281 (PENRIAKKMLLEEIK) are enriched in basic and acidic residues. Acidic residues predominate over residues 1286–1297 (SDEDGSSDDEPE). A compositionally biased stretch (basic and acidic residues) spans 1298-1308 (EGKKRTGKQNE). 3 positions are modified to phosphoserine: S1322, S1324, and S1326. Over residues 1334–1345 (PRYRHRLLRHKL) the composition is skewed to basic residues. S1348 and S1352 each carry phosphoserine. Basic and acidic residues-rich tracts occupy residues 1353-1368 (GEEK…EVKG) and 1408-1417 (KKAELEENQR). A compositionally biased stretch (basic residues) spans 1419-1428 (YKQKKKRRRI). The segment covering 1443–1468 (EEEEEEKEEEEEEEEEEEEEEEDEND) has biased composition (acidic residues). K1488 is covalently cross-linked (Glycyl lysine isopeptide (Lys-Gly) (interchain with G-Cter in SUMO2)). S1527 carries the post-translational modification Phosphoserine. T1529 is subject to Phosphothreonine. Residues 1581–1768 (KTKKSPGSGC…HCMVNFIKEN (188 aa)) enclose the Helicase ATP-binding domain. An ATP-binding site is contributed by 1594-1601 (HCMGLGKT). The DEGH box signature appears at 1719 to 1722 (DEGH). Phosphoserine occurs at positions 1906 and 1913. Residues 1913 to 2000 (SDSDETSMSL…SSNPSSPAPD (88 aa)) are disordered. The segment covering 1929 to 1938 (KKKKKGKKGK) has biased composition (basic residues). Residue K1982 forms a Glycyl lysine isopeptide (Lys-Gly) (interchain with G-Cter in SUMO1); alternate linkage. K1982 is covalently cross-linked (Glycyl lysine isopeptide (Lys-Gly) (interchain with G-Cter in SUMO2); alternate). Residue K1987 forms a Glycyl lysine isopeptide (Lys-Gly) (interchain with G-Cter in SUMO2) linkage. Over residues 1990 to 1999 (SSSNPSSPAP) the composition is skewed to low complexity. Phosphoserine occurs at positions 1992 and 1996. Positions 2010–2280 (DAEVLEHSGK…RKAAWAEYEA (271 aa)) are interaction with MECP2. Residues 2025–2205 (EILRMAEEIG…ERHFTMNELT (181 aa)) form the Helicase C-terminal domain. A Phosphoserine modification is found at S2220. Residues 2462–2492 (PVAGGMQPPPLQRAPPPMRSKNPGPSQGKSM) are disordered. A compositionally biased stretch (pro residues) spans 2468-2479 (QPPPLQRAPPPM). An omega-N-methylarginine mark is found at R2474 and R2480.

This sequence belongs to the SNF2/RAD54 helicase family. Interacts with DAXX to form the chromatin remodeling complex ATRX:DAXX. Probably binds EZH2. Binds annexin V in a calcium and phosphatidylcholine/phosphatidylserine-dependent manner. Interacts directly with CBX5 via the PxVxL motif. Interacts with RAD50, MRE11 and NBN; indicative for an association with the MRN complex. Interacts with histone MACROH2A1. Interacts with histone H3 peptides methylated at 'Lys-10' with preferences H3K9me3 &gt; H3K9me2 &gt; H3K9me1. Interacts with histone H3 peptides unmethylated at 'Lys-5' (H3K4me0). Interacts with MECP2, SMC1 and SMC3. Interacts with SETDB1, TRIM28 and ZNF274. Phosphorylated at serine residues during mitose. Phosphorylation may promote the release from the nuclear matrix and progression to mitosis. In terms of tissue distribution, ubiquitous.

The protein localises to the nucleus. It localises to the chromosome. Its subcellular location is the telomere. The protein resides in the PML body. It carries out the reaction ATP + H2O = ADP + phosphate + H(+). Functionally, involved in transcriptional regulation and chromatin remodeling. Facilitates DNA replication in multiple cellular environments and is required for efficient replication of a subset of genomic loci. Binds to DNA tandem repeat sequences in both telomeres and euchromatin and in vitro binds DNA quadruplex structures. May help stabilizing G-rich regions into regular chromatin structures by remodeling G4 DNA and incorporating H3.3-containing nucleosomes. Catalytic component of the chromatin remodeling complex ATRX:DAXX which has ATP-dependent DNA translocase activity and catalyzes the replication-independent deposition of histone H3.3 in pericentric DNA repeats outside S-phase and telomeres, and the in vitro remodeling of H3.3-containing nucleosomes. Its heterochromatin targeting is proposed to involve a combinatorial readout of histone H3 modifications (specifically methylation states of H3K9 and H3K4) and association with CBX5. Involved in maintaining telomere structural integrity in embryonic stem cells which probably implies recruitment of CBX5 to telomeres. Reports on the involvement in transcriptional regulation of telomeric repeat-containing RNA (TERRA) are conflicting; according to a report, it is not sufficient to decrease chromatin condensation at telomeres nor to increase expression of telomeric RNA in fibroblasts. May be involved in telomere maintenance via recombination in ALT (alternative lengthening of telomeres) cell lines. Acts as a negative regulator of chromatin incorporation of transcriptionally repressive histone MACROH2A1, particularily at telomeres and the alpha-globin cluster in erythroleukemic cells. Participates in the allele-specific gene expression at the imprinted IGF2/H19 gene locus. On the maternal allele, required for the chromatin occupancy of SMC1 and CTCTF within the H19 imprinting control region (ICR) and involved in esatblishment of histone tails modifications in the ICR. May be involved in brain development and facial morphogenesis. Binds to zinc-finger coding genes with atypical chromatin signatures and regulates its H3K9me3 levels. Forms a complex with ZNF274, TRIM28 and SETDB1 to facilitate the deposition and maintenance of H3K9me3 at the 3' exons of zinc-finger genes. In Homo sapiens (Human), this protein is Transcriptional regulator ATRX (ATRX).